The following is a 338-amino-acid chain: Holliday junction branch migration complex subunit RuvB (338 aa).

The tract at residues 4–186 is large ATPase domain (RuvB-L); it reads ADRLIAPDNP…FGITQRLEYY (183 aa). ATP-binding positions include Ile25, Arg26, Gly67, Lys70, Thr71, Thr72, 133–135, Arg176, Tyr186, and Arg223; that span reads EDY. Thr71 contacts Mg(2+). Residues 187-257 are small ATPAse domain (RuvB-S); the sequence is KVEDLQNIVQ…VADKALNMLD (71 aa). The interval 260 to 338 is head domain (RuvB-H); it reads AKGFDYMDRK…HFGIDKPSNR (79 aa). Positions 296, 315, and 320 each coordinate DNA.

Belongs to the RuvB family. In terms of assembly, homohexamer. Forms an RuvA(8)-RuvB(12)-Holliday junction (HJ) complex. HJ DNA is sandwiched between 2 RuvA tetramers; dsDNA enters through RuvA and exits via RuvB. An RuvB hexamer assembles on each DNA strand where it exits the tetramer. Each RuvB hexamer is contacted by two RuvA subunits (via domain III) on 2 adjacent RuvB subunits; this complex drives branch migration. In the full resolvosome a probable DNA-RuvA(4)-RuvB(12)-RuvC(2) complex forms which resolves the HJ.

It localises to the cytoplasm. It catalyses the reaction ATP + H2O = ADP + phosphate + H(+). Functionally, the RuvA-RuvB-RuvC complex processes Holliday junction (HJ) DNA during genetic recombination and DNA repair, while the RuvA-RuvB complex plays an important role in the rescue of blocked DNA replication forks via replication fork reversal (RFR). RuvA specifically binds to HJ cruciform DNA, conferring on it an open structure. The RuvB hexamer acts as an ATP-dependent pump, pulling dsDNA into and through the RuvAB complex. RuvB forms 2 homohexamers on either side of HJ DNA bound by 1 or 2 RuvA tetramers; 4 subunits per hexamer contact DNA at a time. Coordinated motions by a converter formed by DNA-disengaged RuvB subunits stimulates ATP hydrolysis and nucleotide exchange. Immobilization of the converter enables RuvB to convert the ATP-contained energy into a lever motion, pulling 2 nucleotides of DNA out of the RuvA tetramer per ATP hydrolyzed, thus driving DNA branch migration. The RuvB motors rotate together with the DNA substrate, which together with the progressing nucleotide cycle form the mechanistic basis for DNA recombination by continuous HJ branch migration. Branch migration allows RuvC to scan DNA until it finds its consensus sequence, where it cleaves and resolves cruciform DNA. The chain is Holliday junction branch migration complex subunit RuvB from Vibrio atlanticus (strain LGP32) (Vibrio splendidus (strain Mel32)).